The sequence spans 237 residues: Phosphoribosylaminoimidazole-succinocarboxamide synthase (237 aa).

This sequence belongs to the SAICAR synthetase family.

It catalyses the reaction 5-amino-1-(5-phospho-D-ribosyl)imidazole-4-carboxylate + L-aspartate + ATP = (2S)-2-[5-amino-1-(5-phospho-beta-D-ribosyl)imidazole-4-carboxamido]succinate + ADP + phosphate + 2 H(+). It functions in the pathway purine metabolism; IMP biosynthesis via de novo pathway; 5-amino-1-(5-phospho-D-ribosyl)imidazole-4-carboxamide from 5-amino-1-(5-phospho-D-ribosyl)imidazole-4-carboxylate: step 1/2. The sequence is that of Phosphoribosylaminoimidazole-succinocarboxamide synthase from Enterococcus faecalis (strain ATCC 700802 / V583).